The chain runs to 1417 residues: DNA-directed RNA polymerase subunit beta' (1417 aa).

Residues C71, C73, C86, and C89 each contribute to the Zn(2+) site. The Mg(2+) site is built by D461, D463, and D465. Zn(2+) contacts are provided by C815, C889, C896, and C899.

It belongs to the RNA polymerase beta' chain family. In terms of assembly, the RNAP catalytic core consists of 2 alpha, 1 beta, 1 beta' and 1 omega subunit. When a sigma factor is associated with the core the holoenzyme is formed, which can initiate transcription. Mg(2+) is required as a cofactor. The cofactor is Zn(2+).

The enzyme catalyses RNA(n) + a ribonucleoside 5'-triphosphate = RNA(n+1) + diphosphate. DNA-dependent RNA polymerase catalyzes the transcription of DNA into RNA using the four ribonucleoside triphosphates as substrates. The sequence is that of DNA-directed RNA polymerase subunit beta' from Pasteurella multocida (strain Pm70).